Here is a 335-residue protein sequence, read N- to C-terminus: Beta-ketoacyl-[acyl-carrier-protein] synthase III (335 aa).

Active-site residues include Cys116 and His256. The tract at residues 257 to 261 (QANLR) is ACP-binding. Asn286 is a catalytic residue.

The protein belongs to the thiolase-like superfamily. FabH family. Homodimer.

The protein localises to the cytoplasm. The catalysed reaction is malonyl-[ACP] + acetyl-CoA + H(+) = 3-oxobutanoyl-[ACP] + CO2 + CoA. It participates in lipid metabolism; fatty acid biosynthesis. Catalyzes the condensation reaction of fatty acid synthesis by the addition to an acyl acceptor of two carbons from malonyl-ACP. Catalyzes the first condensation reaction which initiates fatty acid synthesis and may therefore play a role in governing the total rate of fatty acid production. Possesses both acetoacetyl-ACP synthase and acetyl transacylase activities. Its substrate specificity determines the biosynthesis of branched-chain and/or straight-chain of fatty acids. The polypeptide is Beta-ketoacyl-[acyl-carrier-protein] synthase III (Porphyromonas gingivalis (strain ATCC 33277 / DSM 20709 / CIP 103683 / JCM 12257 / NCTC 11834 / 2561)).